We begin with the raw amino-acid sequence, 339 residues long: Cyclin-Y-like protein 1-A (339 aa).

The segment covering 1-13 (MGNTVTCCVSPDS) has biased composition (polar residues). A disordered region spans residues 1–42 (MGNTVTCCVSPDSSPKEGRDREVTESGEPYQAQGEPQDGDVQ). Residues 14–24 (SPKEGRDREVT) are compositionally biased toward basic and acidic residues. One can recognise a Cyclin N-terminal domain in the interval 141–263 (DIFDEKLHPI…FLELLQFNIN (123 aa)).

Belongs to the cyclin family. Cyclin Y subfamily.

This chain is Cyclin-Y-like protein 1-A (ccnyl1-a), found in Xenopus laevis (African clawed frog).